A 171-amino-acid polypeptide reads, in one-letter code: UPF0398 protein SPy_1647/M5005_Spy1353 (171 aa).

The protein belongs to the UPF0398 family.

This is UPF0398 protein SPy_1647/M5005_Spy1353 from Streptococcus pyogenes serotype M1.